We begin with the raw amino-acid sequence, 205 residues long: Thymidylate kinase (205 aa).

9 to 16 (GPEGSGKT) serves as a coordination point for ATP.

The protein belongs to the thymidylate kinase family.

The enzyme catalyses dTMP + ATP = dTDP + ADP. Phosphorylation of dTMP to form dTDP in both de novo and salvage pathways of dTTP synthesis. This is Thymidylate kinase from Staphylococcus aureus (strain NCTC 8325 / PS 47).